Here is a 147-residue protein sequence, read N- to C-terminus: Large ribosomal subunit protein uL15 (147 aa).

The interval 1-45 (MTIKLHHLRPAPGAKSDKIRVGRGEGGKRGKTAGRGTKGTKARKN) is disordered. Residues 15-28 (KSDKIRVGRGEGGK) show a composition bias toward basic and acidic residues.

The protein belongs to the universal ribosomal protein uL15 family. As to quaternary structure, part of the 50S ribosomal subunit.

In terms of biological role, binds to the 23S rRNA. This Rhodococcus jostii (strain RHA1) protein is Large ribosomal subunit protein uL15.